The sequence spans 232 residues: Large ribosomal subunit protein uL1 (232 aa).

This sequence belongs to the universal ribosomal protein uL1 family. As to quaternary structure, part of the 50S ribosomal subunit.

Its function is as follows. Binds directly to 23S rRNA. The L1 stalk is quite mobile in the ribosome, and is involved in E site tRNA release. In terms of biological role, protein L1 is also a translational repressor protein, it controls the translation of the L11 operon by binding to its mRNA. The sequence is that of Large ribosomal subunit protein uL1 from Burkholderia ambifaria (strain MC40-6).